The primary structure comprises 910 residues: Translation factor GUF1 homolog, mitochondrial (910 aa).

The tract at residues 126 to 188 is disordered; sequence RRGNGLPFER…DGGGAPEHPQ (63 aa). The tr-type G domain occupies 189-366; sequence QNVRNFCILA…RIVSDIPCPA (178 aa). Residues 198-205, 259-263, and 313-316 each bind GTP; these read AHIDSGKS, DTPGH, and NKID. The segment at 639–683 is disordered; that stretch reads GSGDGRADGSADGSADGSADGSGDSSAHGSSDRRGAGCARGSDDI. The segment covering 646 to 667 has biased composition (low complexity); sequence DGSADGSADGSADGSGDSSAHG.

Belongs to the TRAFAC class translation factor GTPase superfamily. Classic translation factor GTPase family. LepA subfamily.

It localises to the mitochondrion inner membrane. It carries out the reaction GTP + H2O = GDP + phosphate + H(+). Functionally, promotes mitochondrial protein synthesis. May act as a fidelity factor of the translation reaction, by catalyzing a one-codon backward translocation of tRNAs on improperly translocated ribosomes. Binds to mitochondrial ribosomes in a GTP-dependent manner. The protein is Translation factor GUF1 homolog, mitochondrial of Plasmodium vivax (strain Salvador I).